Reading from the N-terminus, the 55-residue chain is Large ribosomal subunit protein bL33 (55 aa).

This sequence belongs to the bacterial ribosomal protein bL33 family.

This Bifidobacterium longum (strain DJO10A) protein is Large ribosomal subunit protein bL33.